A 388-amino-acid chain; its full sequence is Calcium-binding and spermatid-specific protein 1 (388 aa).

The tract at residues 1–20 is disordered; it reads MAEDGLPKIYSHPPAESTKT. Thr280 is modified (phosphothreonine; by CK2). Ser312 and Ser344 each carry phosphoserine.

The protein resides in the cytoplasm. It is found in the mitochondrion inner membrane. Its subcellular location is the cell projection. It localises to the cilium. The protein localises to the flagellum. The protein resides in the cytoplasmic vesicle. It is found in the secretory vesicle. Its subcellular location is the acrosome. Calcium-binding protein. Essential for maintaining the structural integrity of the sperm flagella. This chain is Calcium-binding and spermatid-specific protein 1 (CABS1), found in Bos taurus (Bovine).